A 431-amino-acid chain; its full sequence is Protein CLT2, chloroplastic (431 aa).

A chloroplast-targeting transit peptide spans 1–79 (MDTVLMATTP…PMRRPRFSVG (79 aa)). 10 helical membrane-spanning segments follow: residues 99 to 119 (VVIV…LVPM), 122 to 142 (YPFF…FTIL), 163 to 183 (FAII…AAAM), 188 to 208 (VIPI…LLIL), 212 to 232 (FLLN…VAVS), 244 to 264 (IGFL…GASI), 284 to 304 (IFVV…LLLP), 343 to 363 (ILPL…LHLV), 365 to 385 (ISSA…AVYI), and 403 to 423 (FTMG…PTTP).

This sequence belongs to the CRT-like transporter family.

It is found in the plastid. The protein resides in the chloroplast membrane. Involved in thiol transport from the plastid to the cytosol. Transports probably both glutathione (GSH) and its precursor, gamma-glutamylcysteine (gamma-EC). This is Protein CLT2, chloroplastic from Arabidopsis thaliana (Mouse-ear cress).